Reading from the N-terminus, the 741-residue chain is uncharacterized protein (741 aa).

Residues 64–103 (VETLLCMLEQLTIRIEFLTKEIAQQEAAYKDIQNTQKSLV) adopt a coiled-coil conformation. Polar residues predominate over residues 137–155 (FERQNRTAPLQSKVTTASL). 3 disordered regions span residues 137–214 (FERQ…TGLP), 280–318 (RTYS…SKSS), and 330–364 (SVSS…FLTP). 2 stretches are compositionally biased toward low complexity: residues 161-173 (RTSM…ASRT) and 197-209 (KSKS…KSLA). Polar residues predominate over residues 298–308 (SHLPNRTTEVP). Low complexity-rich tracts occupy residues 309-318 (SISKQLSKSS) and 330-344 (SVSS…TPQS). Positions 346 to 356 (PRAQSASTETA) are enriched in polar residues. ATP is bound at residue 499-506 (GPPGTGKT).

Belongs to the AAA ATPase family.

The protein localises to the cytoplasm. It is found in the nucleus. This is an uncharacterized protein from Schizosaccharomyces pombe (strain 972 / ATCC 24843) (Fission yeast).